Here is a 620-residue protein sequence, read N- to C-terminus: MALLQIAEPGQSASPHQHKLAVGIDLGTTNSLIATVRSGQVDILLDEKERPLLPSVVHFEQDNVIVGYEAAELASQSPQNTIVSVKRLIGRSLADVQQRYPSLPYQFEASENGLPLIRTSKGTLSPVEISAEILKKLTALAEKRLAGELSGAVITVPAYFDDAQRQSTKDAAKLAGINVLRLLNEPTAAAIAYGLDSGQEGVIAVYDLGGGTFDISILRLSKGVFEVLATGGDTALGGDDFDHQLMDWIVAQSGIAPQNAQQQRQLTELATQIKIALTDKLETSISYQGWQGNISREQFNQLIQGLVKRSLLACRRALKDADVSADEVCEVVMVGGSTRVPFVREQVAAFFQKEPLTSIDPDKVVALGAGIQADILVGNKPDADMLLLDVIPLSLGIETMGGLVEKIIPRNTTIPVARAQEFTTFKDGQTAMSVHVVQGEREMVADCRSLARFSLRGIPAMAAGAAHVRVTYQVDADGLLSVTAMEKSTGVQSSIQVKPSYGLSDDEITNMLKASMLNAKEDIQARLLAEQRVEAQRVLESVGSALSADQDLLNDEELSAVKNAIISLQRLQKEGDTQEIKQGIKQLDLATQEFASRRMDKSIRQALAGKAIDDVMKNAK.

It belongs to the heat shock protein 70 family.

Functionally, chaperone involved in the maturation of iron-sulfur cluster-containing proteins. Has a low intrinsic ATPase activity which is markedly stimulated by HscB. The sequence is that of Chaperone protein HscA homolog from Pasteurella multocida (strain Pm70).